The chain runs to 381 residues: UDP-4-amino-4-deoxy-L-arabinose--oxoglutarate aminotransferase (381 aa).

Lys-182 carries the N6-(pyridoxal phosphate)lysine modification.

Belongs to the DegT/DnrJ/EryC1 family. ArnB subfamily. As to quaternary structure, homodimer. It depends on pyridoxal 5'-phosphate as a cofactor.

It carries out the reaction UDP-4-amino-4-deoxy-beta-L-arabinose + 2-oxoglutarate = UDP-beta-L-threo-pentopyranos-4-ulose + L-glutamate. It participates in nucleotide-sugar biosynthesis; UDP-4-deoxy-4-formamido-beta-L-arabinose biosynthesis; UDP-4-deoxy-4-formamido-beta-L-arabinose from UDP-alpha-D-glucuronate: step 2/3. The protein operates within bacterial outer membrane biogenesis; lipopolysaccharide biosynthesis. Catalyzes the conversion of UDP-4-keto-arabinose (UDP-Ara4O) to UDP-4-amino-4-deoxy-L-arabinose (UDP-L-Ara4N). The modified arabinose is attached to lipid A and is required for resistance to polymyxin and cationic antimicrobial peptides. The chain is UDP-4-amino-4-deoxy-L-arabinose--oxoglutarate aminotransferase from Proteus mirabilis (strain HI4320).